The primary structure comprises 630 residues: MDGESQTSKLSCEHMYSWYFTREELEKFSPSRKDGITEIMESEIRQLYCSFIRDVGIRLKLPQMTIATAIMFCHRFYLYQSLAKNGWQTIATVCIFLASKVEDTPCPLDQVIRVAYGTMYRRDPATARRIHQKDVFEKQKALILTGERLVLTTVRFDFNIQHPYRPLLDAMEKLGISQKEVKQVAWNFVNDWLKTTLCLQYKPQYIAAGSLYLAAKFQNVKLPVHGGHVWWHQFDVAPKPLEAVLQQMREMVHMKAKLFAHPSPAKQKEVLFEGMLLISNSPDSVLTQSSLSVSSSSPEIGDPNDHLQVDSSQDIVHIEDRSKSYPERNLSNLTADMNNPGKTHNKESLDQALKIKHGGLISCNQQIPLDAIAKIDSSTAKCVEQNIGICCSSSNTFNGKILNPFSISQRSGDKTKLCSEGGSSLTDVDSKSTQSVEPPTTICNHTSDSLNVDSLCSDQRLANSTAGTTEKASFVLPVQIKVDHLCVERKKVDVARIKDLLMKRKRRRERQGRCIPSVDLSEEAWIERELESGIVFKKVDHVVASYDLSDEGWIERELESGIVIGQKNDQPVSLDGLTEDDWIERELESGIIVEPGPAGKKLKSKLLSEGHEIMNSRWEINGKSMQNQVT.

The span at 288-297 (QSSLSVSSSS) shows a compositional bias: low complexity. Disordered stretches follow at residues 288 to 313 (QSSL…DSSQ) and 410 to 439 (RSGD…VEPP). Over residues 421 to 439 (GGSSLTDVDSKSTQSVEPP) the composition is skewed to polar residues.

Belongs to the cyclin family. Cyclin T subfamily.

The sequence is that of Cyclin-T1-2 (CYCT1_2) from Oryza sativa subsp. japonica (Rice).